The primary structure comprises 309 residues: Ferrochelatase (309 aa).

Residues H187 and E265 each contribute to the Fe cation site.

The protein belongs to the ferrochelatase family.

It localises to the cytoplasm. It catalyses the reaction heme b + 2 H(+) = protoporphyrin IX + Fe(2+). Its pathway is porphyrin-containing compound metabolism; protoheme biosynthesis; protoheme from protoporphyrin-IX: step 1/1. Catalyzes the ferrous insertion into protoporphyrin IX. In Nitratiruptor sp. (strain SB155-2), this protein is Ferrochelatase.